We begin with the raw amino-acid sequence, 148 residues long: uncharacterized protein (148 aa).

Positions 2 to 63 (LDELDKRILY…LINPFKAGYE (62 aa)) constitute an HTH asnC-type domain. Residues 21–40 (YSEIARILGVPESTVRVRVK) constitute a DNA-binding region (H-T-H motif).

This is an uncharacterized protein from Pyrococcus furiosus (strain ATCC 43587 / DSM 3638 / JCM 8422 / Vc1).